Reading from the N-terminus, the 352-residue chain is Putative squamosa promoter-binding-like protein 19 (352 aa).

Residues 68 to 88 (AAAPATRRARGGSGGGGGGGG) form a disordered region. The segment covering 78 to 88 (GGSGGGGGGGG) has biased composition (gly residues). The SBP-type zinc-finger motif lies at 90 to 167 (AEACSVDGCR…DGHNRRRRKP (78 aa)). The Zn(2+) site is built by cysteine 93, cysteine 98, cysteine 115, histidine 118, cysteine 134, cysteine 137, histidine 141, and cysteine 153. Residues 150–166 (KKSCRKRLDGHNRRRRK) carry the Bipartite nuclear localization signal motif. The interval 152-174 (SCRKRLDGHNRRRRKPQHDALNP) is disordered.

The protein localises to the nucleus. Trans-acting factor that binds specifically to the consensus nucleotide sequence 5'-TNCGTACAA-3'. The protein is Putative squamosa promoter-binding-like protein 19 (SPL19) of Oryza sativa subsp. japonica (Rice).